A 2004-amino-acid chain; its full sequence is Immunoglobulin A1 protease (2004 aa).

A signal peptide spans 1 to 42 (MEKYFGEKQERFSFRKLSVGLVSATISSLFFMSVLASSSVDA). The propeptide occupies 43–99 (QETAGVHYKYVADSELSSEEKKQLVYDIPTYVENDDETYYLVYKLNSQNQLAELPNT). Residues 96–100 (LPNTG) carry the LPXTG sorting signal motif. Pentaglycyl murein peptidoglycan amidated threonine is present on Thr-99. Helical transmembrane passes span 106–125 (QALV…FAVS) and 132–154 (KTVL…VHAL). Residues 155–2004 (ENHLLLNYNT…FRSSIFENKK (1850 aa)) lie on the Extracellular side of the membrane. Disordered stretches follow at residues 194–213 (TTSE…PTKQ), 235–305 (QEQT…NPQD), 373–394 (EIVS…TKKT), and 422–720 (PELP…PEKT). Composition is skewed to polar residues over residues 197–213 (ESEV…PTKQ) and 235–246 (QEQTPVSSTKPT). Positions 276–296 (LAEHKNLETKKEEKISPKEKT) are enriched in basic and acidic residues. The G5 domain occupies 314–393 (KPELLYREET…PRIVEKGTKK (80 aa)). 3 repeat units span residues 419 to 435 (AIQP…KGEP), 436 to 452 (EVQP…KGET), and 453 to 469 (EVQP…KGEP). The 3 X 17 AA approximate tandem repeats stretch occupies residues 419 to 469 (AIQPELPEAVVSDKGEPEVQPTLPEAVVTDKGETEVQPESPDTVVSDKGEP). The span at 485-511 (VKPETPVEKTKEQGPEKTEEVPVKPTE) shows a compositional bias: basic and acidic residues. Polar residues-rich tracts occupy residues 516 to 529 (NPNE…SIQE) and 538 to 572 (EEST…SVGE). Basic and acidic residues predominate over residues 574–591 (NKPEHNDSKNENSEKTVE). 2 stretches are compositionally biased toward polar residues: residues 618–639 (EETQ…SNKP) and 648–681 (ESNQ…PSNG). Over residues 682-699 (NSTEDVSTESNTSNSNGN) the composition is skewed to low complexity. The segment covering 700–720 (EEIKQENELDPDKKVEEPEKT) has biased composition (basic and acidic residues). His-1645 provides a ligand contact to Zn(2+). Glu-1646 is an active-site residue. Residues His-1649 and Glu-1669 each contribute to the Zn(2+) site.

Belongs to the peptidase M26 family. Zn(2+) serves as cofactor. Post-translationally, the Gram-positive cell-wall anchor motif LPXTG is located in the N-terminal part, in contrast to such motifs in other known streptococcal and staphylococcal proteins. The protease could be cleaved by the sortase and anchored in the membrane via the two potential N-terminal transmembrane domains, whereas the propeptide located prior to the LPXTG motif would remain attached to the cell wall peptidoglycan by an amide bond.

It localises to the secreted. The protein resides in the cell wall. Its subcellular location is the membrane. The enzyme catalyses Cleavage of Pro-|-Thr bond in the hinge region of the heavy chain of human IgA.. Zinc metalloproteinase which cleaves human immunoglobulin A1 (IgA1) in the hinge region, rendering it less efficient in coating the surface of colonizing or invading pneumococci. Strongly contributes to virulence in mice. May be responsible for pneumococcal infection and is potentially involved in distinct stages of pneumococcal disease. The polypeptide is Immunoglobulin A1 protease (iga) (Streptococcus pneumoniae serotype 4 (strain ATCC BAA-334 / TIGR4)).